A 521-amino-acid chain; its full sequence is U4/U6 small nuclear ribonucleoprotein Prp4 (521 aa).

The residue at position 26 (Lys-26) is an N6-acetyllysine. WD repeat units lie at residues 229 to 268, 271 to 318, 321 to 360, 363 to 402, 405 to 444, 447 to 487, and 490 to 521; these read DDRP…LHTL, HNTN…VADI, HTVR…ILHQ, HSMG…IMFL, HLKE…VYTI, HQNL…LKTL, and HEGK…WMAE.

As to quaternary structure, component of the precatalytic spliceosome (spliceosome B complex). Component of the U4/U6-U5 tri-snRNP complex, a building block of the precatalytic spliceosome (spliceosome B complex). The U4/U6-U5 tri-snRNP complex is composed of the U4, U6 and U5 snRNAs and at least PRPF3, PRPF4, PRPF6, PRPF8, PRPF31, SNRNP200, TXNL4A, SNRNP40, SNRPB, SNRPD1, SNRPD2, SNRPD3, SNRPE, SNRPF, SNRPG, DDX23, CD2BP2, PPIH, SNU13, EFTUD2, SART1 and USP39, plus LSM2, LSM3, LSM4, LSM5, LSM6, LSM7 and LSM8. Interacts directly with PRPF18, PPIH and PRPF3. Part of a heteromeric complex containing PPIH, PRPF3 and PRPF4 that is stable in the absence of RNA. Interacts with ERCC6.

The protein localises to the nucleus. It localises to the nucleus speckle. Functionally, plays a role in pre-mRNA splicing as component of the U4/U6-U5 tri-snRNP complex that is involved in spliceosome assembly, and as component of the precatalytic spliceosome (spliceosome B complex). This Bos taurus (Bovine) protein is U4/U6 small nuclear ribonucleoprotein Prp4 (PRPF4).